A 692-amino-acid chain; its full sequence is MARQFPLEKTRNIGIMAHIDAGKTTTTERILFYTGRVHKIGEVHDGAATMDWMVQEQERGITITSAATTAQWKGHRINIIDTPGHVDFTVEVERSLRVLDGAVAVFCSVGGVEPQSETVWRQADKYGVPRIAYINKMDRMGADFFRGVSMIADRLGANPVPIQIPIGAEDQFKGIIDLVTMKAMIYTDDLGTTSDVADIPGDLVDQANEYREKLLEAVADTDEELMMKYLEGEELTEEEIRNGIRKGTIGLKFIPVVCGSSFKNKGVQPLLDAVVEYMPAPTDVPNIKGVHPETGEADERHSSDKDPFSALAFKIMADPYVGKLAFFRVYSGVLGSGSYVYNSTKGKRERIGRILQMHANHREEIPEVYAGDIAAAVGLKDTTTGDTLCDDKAPIILESMQFPDPVINVAIEPKTKQDQEKMGTALARLAEEDPTFKMHTDQDSGQTIIEGMGELHLEIIVDRLQREFKVECNVGRPQVAYKETIRRAVKSEGKFVRQSGGRGQYGHCWIEIEPLEQGSGFEFVNKIVGGVIPREYIAPIGQGIEEAMQNGIQAGYPVMDIRATVYDGSYHDVDSSEMAFKIAGSMAFKAGAAKADPAIIEPVMKVEVTVPEEYMGEVIGDMNSRRGRIEGMEATGTAQIVRGFVPLSEMFGYATDLRSKTQGRGVYVMMFDHYEEVPKNIAEGIVAKRAGA.

In terms of domain architecture, tr-type G spans 8–282 (EKTRNIGIMA…AVVEYMPAPT (275 aa)). GTP is bound by residues 17 to 24 (AHIDAGKT), 81 to 85 (DTPGH), and 135 to 138 (NKMD). Residues 285–304 (PNIKGVHPETGEADERHSSD) are disordered. A compositionally biased stretch (basic and acidic residues) spans 290–304 (VHPETGEADERHSSD).

Belongs to the TRAFAC class translation factor GTPase superfamily. Classic translation factor GTPase family. EF-G/EF-2 subfamily.

The protein localises to the cytoplasm. Catalyzes the GTP-dependent ribosomal translocation step during translation elongation. During this step, the ribosome changes from the pre-translocational (PRE) to the post-translocational (POST) state as the newly formed A-site-bound peptidyl-tRNA and P-site-bound deacylated tRNA move to the P and E sites, respectively. Catalyzes the coordinated movement of the two tRNA molecules, the mRNA and conformational changes in the ribosome. The chain is Elongation factor G from Desulfitobacterium hafniense (strain DSM 10664 / DCB-2).